A 449-amino-acid chain; its full sequence is Putative F-box/LRR-repeat protein At3g44090 (449 aa).

The F-box domain occupies 23–77 (LASMDCLPDDLLVQILYFLPTKEAISTSLLSKRWRTLYSLVHNLDLDDYIFWHHE). LRR repeat units lie at residues 133-163 (YYNLQKDSLWQFGFPYKVFTSTKLVKLSLGT), 186-212 (YIWFEDNQLSDVFLAACPALEDLTIHH), 214-231 (FRPFLISSKNLKKLSVTI), 247-278 (TPNVVDLYYSDFPRPIAPHCHLDSLAKVELDL), 286-311 (RQVQNDADVKNLISEIRNVKTLHLTY), and 320-345 (SKKRDWKVLPLLLERSPNLKTLVLSG).

The protein is Putative F-box/LRR-repeat protein At3g44090 of Arabidopsis thaliana (Mouse-ear cress).